An 83-amino-acid chain; its full sequence is Defensin-like protein 194 (83 aa).

An N-terminal signal peptide occupies residues 1–27; sequence MAMKSVSNFAIFLILFLVTSEISEIEA. 4 disulfides stabilise this stretch: C32–C78, C44–C68, C53–C73, and C57–C75.

This sequence belongs to the DEFL family. Protease inhibitor I18 (RTI/MTI-2) subfamily.

The protein localises to the secreted. This chain is Defensin-like protein 194 (ATTI3), found in Arabidopsis thaliana (Mouse-ear cress).